The sequence spans 326 residues: Target of rapamycin complex subunit LST8 (326 aa).

An N-acetylmethionine modification is found at M1. WD repeat units follow at residues 1–37 (MNTSPGTVGSDPVILATAGYDHTVRFWQAHSGICTRT), 40–80 (HQDS…PIIS), 83–122 (GVNKNVASVGFHEDGRWMYTGGEDCTARIWDLRSRNLQCQ), 126–165 (QVNAPINCVCLHPNQAELIVGDQSGAIHIWDLKTDHNEQL), and 168–207 (EPEVSITSAHIDPDASYMAAVNSTGNCYVWNLTGGIGDEV). Position 51 is a phosphothreonine (T51). K86 is covalently cross-linked (Glycyl lysine isopeptide (Lys-Gly) (interchain with G-Cter in SUMO3)). Residues K215, K245, and K261 each participate in a glycyl lysine isopeptide (Lys-Gly) (interchain with G-Cter in SUMO3) cross-link. The stretch at 218-257 (AHTRYALQCRFSPDSTLLATCSADQTCKIWRTSNFSLMTE) is one WD 6 repeat. One copy of the WD 7 repeat lies at 268–309 (SSRGWMWGCAFSGDSQYIVTASSDNLARLWCVETGEIKREYG). K305 participates in a covalent cross-link: Glycyl lysine isopeptide (Lys-Gly) (interchain with G-Cter in SUMO3); alternate. Glycyl lysine isopeptide (Lys-Gly) (interchain with G-Cter in ubiquitin); alternate cross-links involve residues K305 and K313. Residue K313 forms a Glycyl lysine isopeptide (Lys-Gly) (interchain with G-Cter in SUMO1); alternate linkage.

This sequence belongs to the WD repeat LST8 family. As to quaternary structure, part of the mechanistic target of rapamycin complex 1 (mTORC1) which contains MTOR, MLST8 and RPTOR. mTORC1 associates with AKT1S1/PRAS40, which inhibits its activity. mTORC1 binds to and is inhibited by FKBP12-rapamycin. Within mTORC1, interacts directly with MTOR and RPTOR. Component of the mechanistic target of rapamycin complex 2 (mTORC2), consisting in two heterotretramers composed of MTOR, MLST8, RICTOR and MAPKAP1/SIN1. Contrary to mTORC1, mTORC2 does not bind to and is not sensitive to FKBP12-rapamycin. mTORC1 and mTORC2 associate with DEPTOR, which regulates their activity. Interacts with RHEB. Interacts with MEAK7. Interacts with SIK3. Interacts with SLC38A7; this interaction promotes the recruitment of mTORC1 to the lysosome and its subsequent activation. Post-translationally, phosphorylation at Thr-51 by CDK1 promotes ubiquitination by the SCF(FBXW7) complex, followed by degradation. In terms of processing, ubiquitination by the SCF(FBXW7) and SCF(FBXW11) complexes following phosphorylation at Thr-51 by CDK1, leads to its degradation by the proteasome. Ubiquitination at Lys-305 and Lys-313 by TRAF2 via 'Lys-63'-linked polyubiquitin chains inhibits formation of the mTORC2 complex, while promoting formation of the mTORC1 complex: ubiquitination disrupts the interaction between MLST8 and MAPKAP1/SIN1 to favor mTORC1 assembly. Deubiquitination at Lys-305 and Lys-313 by OTUD7B promotes MLST8 interaction with MAPKAP1/SIN1, facilitating mTORC2 assembly. Sumoylation with SUMO1, SUMO2 and SUMO3 promotes assembly of both mTORC1 and mTORC2 complexes.

The protein resides in the lysosome membrane. It is found in the cytoplasm. Subunit of both mTORC1 and mTORC2, which regulates cell growth and survival in response to nutrient and hormonal signals. mTORC1 is activated in response to growth factors or amino acids. In response to nutrients, mTORC1 is recruited to the lysosome membrane and promotes protein, lipid and nucleotide synthesis by phosphorylating several substrates, such as ribosomal protein S6 kinase (RPS6KB1 and RPS6KB2) and EIF4EBP1 (4E-BP1). In the same time, it inhibits catabolic pathways by phosphorylating the autophagy initiation components ULK1 and ATG13, as well as transcription factor TFEB, a master regulators of lysosomal biogenesis and autophagy. The mTORC1 complex is inhibited in response to starvation and amino acid depletion. Within mTORC1, MLST8 interacts directly with MTOR and enhances its kinase activity. In nutrient-poor conditions, stabilizes the MTOR-RPTOR interaction and favors RPTOR-mediated inhibition of MTOR activity. As part of the mTORC2 complex, transduces signals from growth factors to pathways involved in proliferation, cytoskeletal organization, lipogenesis and anabolic output. mTORC2 is also activated by growth factors, but seems to be nutrient-insensitive. In response to growth factors, mTORC2 phosphorylates and activates AGC protein kinase family members, including AKT (AKT1, AKT2 and AKT3), PKC (PRKCA, PRKCB and PRKCE) and SGK1. mTORC2 functions upstream of Rho GTPases to regulate the actin cytoskeleton, probably by activating one or more Rho-type guanine nucleotide exchange factors. mTORC2 promotes the serum-induced formation of stress-fibers or F-actin. mTORC2 plays a critical role in AKT1 activation by mediating phosphorylation of different sites depending on the context, such as 'Thr-450', 'Ser-473', 'Ser-477' or 'Thr-479', facilitating the phosphorylation of the activation loop of AKT1 on 'Thr-308' by PDPK1/PDK1 which is a prerequisite for full activation. mTORC2 regulates the phosphorylation of SGK1 at 'Ser-422'. mTORC2 also modulates the phosphorylation of PRKCA on 'Ser-657'. Within mTORC2, MLST8 acts as a bridge between MAPKAP1/SIN1 and MTOR. The polypeptide is Target of rapamycin complex subunit LST8 (Bos taurus (Bovine)).